We begin with the raw amino-acid sequence, 239 residues long: Prolyl hydroxylase EGLN3 (239 aa).

Residues 62-73 (AGPRAGVSKRHL) are beta(2)beta(3) 'finger-like' loop. A required for interaction with ADRB2 region spans residues 88 to 104 (CEAINFLLSLIDRLVLY). Residues 116–214 (ERSKAMVACY…RYAMTVWYFD (99 aa)) form the Fe2OG dioxygenase domain. Histidine 135, aspartate 137, and histidine 196 together coordinate Fe cation. Arginine 205 contributes to the 2-oxoglutarate binding site.

As to quaternary structure, interacts with ADRB2; the interaction hydroxylates ADRB2 facilitating its ubiquitination by the VHL-E3 ligase complex. Interacts with PKM; the interaction hydroxylates PKM in hypoxia. Interacts with WDR83; the interaction leads to almost complete elimination of HIF-mediated reporter activity. Interacts with BCL2 (via its BH4 domain); the interaction disrupts the BAX-BCL4 complex inhibiting the anti-apoptotic activity of BCL2. Interacts with LIMD1, WTIP and AJUBA. Requires Fe(2+) as cofactor. L-ascorbate is required as a cofactor. Post-translationally, ubiquitinated by SIAH1 and/or SIAH2 in response to the unfolded protein response (UPR), leading to its degradation. As to expression, highly expressed in cardiac and smooth muscle. Also high expression in brain, skeletal muscle and kidney. Low levels in lung.

It localises to the nucleus. The protein localises to the cytoplasm. It catalyses the reaction L-prolyl-[protein] + 2-oxoglutarate + O2 = trans-4-hydroxy-L-prolyl-[protein] + succinate + CO2. The enzyme catalyses L-prolyl-[hypoxia-inducible factor alpha subunit] + 2-oxoglutarate + O2 = trans-4-hydroxy-L-prolyl-[hypoxia-inducible factor alpha subunit] + succinate + CO2. Its function is as follows. Prolyl hydroxylase that mediates hydroxylation of proline residues in target proteins, such as PKM, TELO2, ATF4 and HIF1A. Target proteins are preferentially recognized via a LXXLAP motif. Cellular oxygen sensor that catalyzes, under normoxic conditions, the post-translational formation of 4-hydroxyproline in hypoxia-inducible factor (HIF) alpha proteins. Hydroxylates a specific proline found in each of the oxygen-dependent degradation (ODD) domains (N-terminal, NODD, and C-terminal, CODD) of HIF1A. Also hydroxylates HIF2A. Has a preference for the CODD site for both HIF1A and HIF2A. Hydroxylation on the NODD site by EGLN3 appears to require prior hydroxylation on the CODD site. Hydroxylated HIFs are then targeted for proteasomal degradation via the von Hippel-Lindau ubiquitination complex. Under hypoxic conditions, the hydroxylation reaction is attenuated allowing HIFs to escape degradation resulting in their translocation to the nucleus, heterodimerization with HIF1B, and increased expression of hypoxy-inducible genes. ELGN3 is the most important isozyme in limiting physiological activation of HIFs (particularly HIF2A) in hypoxia. Also hydroxylates PKM in hypoxia, limiting glycolysis. Under normoxia, hydroxylates and regulates the stability of ADRB2. Regulator of cardiomyocyte and neuronal apoptosis. In cardiomyocytes, inhibits the anti-apoptotic effect of BCL2 by disrupting the BAX-BCL2 complex. In neurons, has a NGF-induced proapoptotic effect, probably through regulating CASP3 activity. Also essential for hypoxic regulation of neutrophilic inflammation. Plays a crucial role in DNA damage response (DDR) by hydroxylating TELO2, promoting its interaction with ATR which is required for activation of the ATR/CHK1/p53 pathway. Also mediates hydroxylation of ATF4, leading to decreased protein stability of ATF4. The chain is Prolyl hydroxylase EGLN3 from Mus musculus (Mouse).